The primary structure comprises 324 residues: Beta-ketoacyl-[acyl-carrier-protein] synthase III (324 aa).

Active-site residues include cysteine 112 and histidine 249. Positions 250–254 are ACP-binding; sequence QANDR. Residue asparagine 279 is part of the active site.

The protein belongs to the thiolase-like superfamily. FabH family. As to quaternary structure, homodimer.

It localises to the cytoplasm. It carries out the reaction malonyl-[ACP] + acetyl-CoA + H(+) = 3-oxobutanoyl-[ACP] + CO2 + CoA. The protein operates within lipid metabolism; fatty acid biosynthesis. Its function is as follows. Catalyzes the condensation reaction of fatty acid synthesis by the addition to an acyl acceptor of two carbons from malonyl-ACP. Catalyzes the first condensation reaction which initiates fatty acid synthesis and may therefore play a role in governing the total rate of fatty acid production. Possesses both acetoacetyl-ACP synthase and acetyl transacylase activities. Its substrate specificity determines the biosynthesis of branched-chain and/or straight-chain of fatty acids. The chain is Beta-ketoacyl-[acyl-carrier-protein] synthase III from Streptococcus gordonii (strain Challis / ATCC 35105 / BCRC 15272 / CH1 / DL1 / V288).